Reading from the N-terminus, the 55-residue chain is ATP synthase small subunit 6-A, mitochondrial (55 aa).

Residues 1 to 11 constitute a mitochondrion transit peptide; that stretch reads MRLFDPWPVFF. Residues 21–39 traverse the membrane as a helical segment; it reads FLTGFAVTGVLITKLTAGL.

It belongs to the ATPase 6 subunit family.

The protein localises to the mitochondrion inner membrane. Its function is as follows. Mitochondrial membrane ATP synthase (F(1)F(0) ATP synthase or Complex V) produces ATP from ADP in the presence of a proton gradient across the membrane which is generated by electron transport complexes of the respiratory chain. F-type ATPases consist of two structural domains, F(1) - containing the extramembraneous catalytic core and F(0) - containing the membrane proton channel, linked together by a central stalk and a peripheral stalk. During catalysis, ATP synthesis in the catalytic domain of F(1) is coupled via a rotary mechanism of the central stalk subunits to proton translocation. Part of the complex F(0) domain. Confers tolerance to several abiotic stresses (e.g. salt, mannitol, drought, oxidative and cold stresses), probably by providing additional energy needed for cell homeostasis. The chain is ATP synthase small subunit 6-A, mitochondrial from Arabidopsis thaliana (Mouse-ear cress).